The primary structure comprises 493 residues: Serine/threonine-protein kinase chk-1 (493 aa).

The Protein kinase domain maps to 26–286 (YRVIRTLGEG…IEQIKTDPWF (261 aa)). ATP-binding positions include 32-40 (LGEGAFGEV) and K56. D150 functions as the Proton acceptor in the catalytic mechanism. Positions 308 to 348 (DENSPDCNISSTQQADAVSTAKRRHLETPDKVAHVERQNAS) are disordered. Positions 312–324 (PDCNISSTQQADA) are enriched in polar residues. Residues 333 to 344 (LETPDKVAHVER) show a composition bias toward basic and acidic residues.

This sequence belongs to the protein kinase superfamily. CAMK Ser/Thr protein kinase family. NIM1 subfamily.

It is found in the cytoplasm. It localises to the nucleus. It catalyses the reaction L-seryl-[protein] + ATP = O-phospho-L-seryl-[protein] + ADP + H(+). The catalysed reaction is L-threonyl-[protein] + ATP = O-phospho-L-threonyl-[protein] + ADP + H(+). In terms of biological role, serine/threonine-protein kinase which is required for checkpoint-mediated cell cycle arrest and activation of DNA repair in response to the presence of DNA damage or unreplicated DNA. May also negatively regulate cell cycle progression during unperturbed cell cycles. Required for checkpoint mediated cell cycle arrest in response to DNA damage in germline cells. Essential for embryogenesis. This is Serine/threonine-protein kinase chk-1 (chk-1) from Caenorhabditis briggsae.